We begin with the raw amino-acid sequence, 176 residues long: Inorganic pyrophosphatase (176 aa).

Positions 30, 44, and 56 each coordinate substrate. Mg(2+) is bound by residues Asp-66, Asp-71, and Asp-103. Position 142 (Tyr-142) interacts with substrate.

The protein belongs to the PPase family. In terms of assembly, homohexamer. Requires Mg(2+) as cofactor.

Its subcellular location is the cytoplasm. It carries out the reaction diphosphate + H2O = 2 phosphate + H(+). Functionally, catalyzes the hydrolysis of inorganic pyrophosphate (PPi) forming two phosphate ions. The chain is Inorganic pyrophosphatase from Vibrio vulnificus (strain CMCP6).